A 70-amino-acid polypeptide reads, in one-letter code: Conotoxin Cl6.13 (70 aa).

A signal peptide spans 1–21; it reads MKFPLLFISLALAAFLTRVQD. Residues 22-33 constitute a propeptide that is removed on maturation; it reads ADSSVISKEKSV. 3 cysteine pairs are disulfide-bonded: Cys41/Cys58, Cys48/Cys63, and Cys57/Cys68.

In terms of tissue distribution, expressed by the venom duct.

It localises to the secreted. In Californiconus californicus (California cone), this protein is Conotoxin Cl6.13.